The sequence spans 345 residues: Dihydroorotate dehydrogenase (quinone) (345 aa).

FMN is bound by residues 65–69 (AGLDK) and Thr-89. A substrate-binding site is contributed by Lys-69. 114–118 (NRMGF) serves as a coordination point for substrate. FMN-binding residues include Asn-142 and Asn-175. Asn-175 is a substrate binding site. Ser-178 serves as the catalytic Nucleophile. Asn-180 provides a ligand contact to substrate. FMN-binding residues include Lys-220 and Thr-248. 249 to 250 (NT) contacts substrate. FMN contacts are provided by residues Gly-271, Gly-300, and 321–322 (YT).

The protein belongs to the dihydroorotate dehydrogenase family. Type 2 subfamily. Monomer. Requires FMN as cofactor.

The protein localises to the cell membrane. It catalyses the reaction (S)-dihydroorotate + a quinone = orotate + a quinol. It participates in pyrimidine metabolism; UMP biosynthesis via de novo pathway; orotate from (S)-dihydroorotate (quinone route): step 1/1. Catalyzes the conversion of dihydroorotate to orotate with quinone as electron acceptor. The chain is Dihydroorotate dehydrogenase (quinone) from Burkholderia cenocepacia (strain ATCC BAA-245 / DSM 16553 / LMG 16656 / NCTC 13227 / J2315 / CF5610) (Burkholderia cepacia (strain J2315)).